A 124-amino-acid chain; its full sequence is Mini zinc finger protein 4 (124 aa).

A ZF-HD dimerization-type; degenerate zinc finger spans residues 35-84 (YGECRRNHAARMGGHAVDGCREFLAEGEEGTGGALRCAACGCHRSFHRRV).

Homo- and heterodimers.

Its subcellular location is the cytoplasm. Inhibits zinc finger homeodomain (ZHD) transcription factors, by interacting with them to prevent both their nuclear localization and their DNA-binding properties. The polypeptide is Mini zinc finger protein 4 (MIF4) (Oryza sativa subsp. japonica (Rice)).